Here is a 322-residue protein sequence, read N- to C-terminus: RNA-binding protein KhpB (322 aa).

A jag_N domain region spans residues 3–52; it reads VFEGNTVAAAIAAGLKQLHRTRDQVEVEVIAEAKKGFLGLGKHPAQVRLT. A compositionally biased stretch (low complexity) spans 58-82; it reads AAPATTPTSATATAQQSVATESTTA. The interval 58–162 is disordered; the sequence is AAPATTPTSA…AADQSQTPRT (105 aa). At Thr-89 the chain carries Phosphothreonine. A compositionally biased stretch (polar residues) spans 89–99; the sequence is TVQTPKSTPTR. The span at 100 to 129 shows a compositional bias: low complexity; that stretch reads QAKTSQATTSAAKPATSKAKAVAKPASMAV. A compositionally biased stretch (polar residues) spans 141–161; sequence SKPATTSKTKSVAADQSQTPR. Residues 174–251 form the KH domain; the sequence is ETAVRALCDY…ASHVNVVLDV (78 aa). The R3H domain maps to 256–322; sequence ERRAATLKRL…HRAVVVAIRK (67 aa).

As to quaternary structure, forms a complex with KhpA.

It localises to the cytoplasm. Functionally, a probable RNA chaperone. Forms a complex with KhpA which binds to cellular RNA and controls its expression. Plays a role in peptidoglycan (PG) homeostasis and cell length regulation. In terms of biological role, necessary for correct cell elongation. In Lactiplantibacillus plantarum (strain ATCC BAA-793 / NCIMB 8826 / WCFS1) (Lactobacillus plantarum), this protein is RNA-binding protein KhpB.